A 539-amino-acid polypeptide reads, in one-letter code: Chaperonin GroEL (539 aa).

Residues 29–32 (TLGP), 86–90 (DGTTT), Gly-413, and Asp-492 contribute to the ATP site.

The protein belongs to the chaperonin (HSP60) family. In terms of assembly, forms a cylinder of 14 subunits composed of two heptameric rings stacked back-to-back. Interacts with the co-chaperonin GroES.

It is found in the cytoplasm. It catalyses the reaction ATP + H2O + a folded polypeptide = ADP + phosphate + an unfolded polypeptide.. In terms of biological role, together with its co-chaperonin GroES, plays an essential role in assisting protein folding. The GroEL-GroES system forms a nano-cage that allows encapsulation of the non-native substrate proteins and provides a physical environment optimized to promote and accelerate protein folding. This Fusobacterium nucleatum subsp. nucleatum (strain ATCC 25586 / DSM 15643 / BCRC 10681 / CIP 101130 / JCM 8532 / KCTC 2640 / LMG 13131 / VPI 4355) protein is Chaperonin GroEL.